A 229-amino-acid chain; its full sequence is Germin-like protein 12-2 (229 aa).

A signal peptide spans 1–22 (MASSNFFLLTALIALVATQAMA). The cysteines at positions 32 and 47 are disulfide-linked. Residues 62–217 (ANLDKPMDTT…AFQVDKKAVD (156 aa)) form the Cupin type-1 domain. N78 carries an N-linked (GlcNAc...) asparagine glycan. Mn(2+) contacts are provided by H111, H113, E118, and H162.

Belongs to the germin family. Oligomer (believed to be a pentamer but probably hexamer).

It localises to the secreted. Its subcellular location is the extracellular space. The protein localises to the apoplast. Its function is as follows. May play a role in plant defense. Probably has no oxalate oxidase activity even if the active site is conserved. The polypeptide is Germin-like protein 12-2 (Oryza sativa subsp. japonica (Rice)).